The sequence spans 420 residues: Protein phosphatase methylesterase 1 (420 aa).

Low complexity-rich tracts occupy residues 18–28 (PEAPLLSESSS) and 42–51 (SSVSSTGTVI). Residues 18 to 51 (PEAPLLSESSSMNHPAESSHDEDSSSVSSTGTVI) form a disordered region. Catalysis depends on residues S197, D223, and H354.

It belongs to the AB hydrolase superfamily.

The catalysed reaction is [phosphatase 2A protein]-C-terminal L-leucine methyl ester + H2O = [phosphatase 2A protein]-C-terminal L-leucine + methanol + H(+). Functionally, demethylates proteins that have been reversibly carboxymethylated. Demethylates the phosphatase PP2A catalytic subunit. The protein is Protein phosphatase methylesterase 1 (ppe1) of Aspergillus fumigatus (strain ATCC MYA-4609 / CBS 101355 / FGSC A1100 / Af293) (Neosartorya fumigata).